Reading from the N-terminus, the 198-residue chain is Recombination protein RecR (198 aa).

Residues cysteine 58 to cysteine 73 form a C4-type zinc finger. In terms of domain architecture, Toprim spans serine 81–proline 175.

The protein belongs to the RecR family.

In terms of biological role, may play a role in DNA repair. It seems to be involved in an RecBC-independent recombinational process of DNA repair. It may act with RecF and RecO. The chain is Recombination protein RecR from Clostridium botulinum (strain Alaska E43 / Type E3).